Here is a 1047-residue protein sequence, read N- to C-terminus: Suppression of tumorigenicity 18 protein (1047 aa).

Disordered stretches follow at residues 41-92 (TAED…HSTA), 168-221 (FLIH…VPKY), and 251-286 (DSET…SESL). Basic residues predominate over residues 52 to 65 (NKRKSLLMKPRHYS). The span at 171 to 181 (HSDDGRDKIDD) shows a compositional bias: basic and acidic residues. 2 CCHHC-type zinc fingers span residues 359 to 402 (PRPE…PLEI) and 403 to 446 (LAMH…KLAM). Residues cysteine 368, cysteine 373, histidine 386, cysteine 392, cysteine 412, cysteine 417, histidine 430, and cysteine 436 each coordinate Zn(2+). Disordered regions lie at residues 523-563 (GRKT…SYSY) and 672-710 (YSKT…SPKP). Polar residues predominate over residues 550 to 563 (AHTQSPGRASSYSY). Positions 677–687 (GKTEEEKEKDP) are enriched in basic and acidic residues. CCHHC-type zinc fingers lie at residues 715-758 (RDLK…LKSL), 759-802 (MAAN…GVKM), 807-850 (EEKE…QKEN), and 860-903 (KLNK…IKKG). The Zn(2+) site is built by cysteine 724, cysteine 729, histidine 742, cysteine 748, cysteine 768, cysteine 773, histidine 786, cysteine 792, cysteine 816, cysteine 821, histidine 834, cysteine 840, cysteine 869, cysteine 874, histidine 887, and cysteine 893. Residues 920-992 (IESDEEIRHL…AGLSQALISS (73 aa)) are a coiled coil.

It belongs to the MYT1 family. Detected at low levels in heart, liver, kidney, skeletal muscle, pancreas, testis, ovary and prostate. Detected at even lower levels in mammary epithelial cells and breast cancer cells.

The protein localises to the nucleus. Functionally, repressor that binds to DNA sequences containing a bipartite element consisting of a direct repeat of the sequence 5'-AAAGTTT-3' separated by 2-9 nucleotides. Represses basal transcription activity from target promoters. Inhibits colony formation in cultured breast cancer cells. The chain is Suppression of tumorigenicity 18 protein (ST18) from Homo sapiens (Human).